The following is a 30-amino-acid chain: Photosystem I reaction center subunit XII (30 aa).

A helical transmembrane segment spans residues 7 to 26 (IFVALLFALVSAVLAIRLGT).

Belongs to the PsaM family.

The protein localises to the plastid. Its subcellular location is the chloroplast thylakoid membrane. In Gracilaria tenuistipitata var. liui (Red alga), this protein is Photosystem I reaction center subunit XII.